The following is a 1783-amino-acid chain: MANGRMSMYSVASEGLGGPRAGQQPSQFSTTTLLNAIHNIYLSSQPFKLDAGTSLVVNTWLTASQTGPDGRTGGTIDAALGARAWEHARRRAEDGCIVLGSLHTSCPSLLTPFLSSLPLSLPSSLYKSLEAIQPFLRCSTPYNPSTPRQIALGVTLTLNLTGSLRGAAIALSQGGIDSTKGLLNIPVEAGYRAFDVFYYLLTSASTPAEREFLGLKSASSYALLAKSGTYEPPSYLPTADDAAAADDFRSALKDIGIKGSAHRNLISTLAGLLKLGDTLDYNLDEDVFDEICEDVSGLLGMDPETLATQCTTEDRATLVGGLYEALVDWVISKANEAISAQMVRIRDGTESIGGGGARTPTSNGEDDTVCITILDIPDPTLGKALAMRGVFDDTLGINSEMIADGVEVSAAGSTVVREMQAAIGEVGHELGIMTSATGRDRQHALEKREEVLEKIGHSADEDAFLKKLLFPITGQGIDLGRAGRLDLSSLLSSSRVWYHLSIHPTDDSPASLAALPSINSAWSAGTVSRQLRSWRLPEWANRRNKNLDFTADFDIDEFVQRYALLGCKDGREGIETWILERGWTNGEVVVGKERVWVRESAWWEAESMLDMKPLDSNLPGMGNVMAVNNLESGYSANGSGYFPTPMLDTTPNGSRDHLIAHQRNFSQGNLSQHTLAHNAAMRAPSVAPSGMRNVQAGDYGLGTKGDTFKGQVFYNNEGEFVGQMDPEIADGKHVEEKTMDKDRRIWVAIVWFWTFWIPSPLLSFVGRMKRPDVRMAWREKLTLVWFIVLINAAIVFWIVAFGKILCPNFDKAWNAKEVAYHTGENDFYVSFRGGVYDISKFWKIQHSDTAIETTKENMMPFAGLNMDDYFPPPLPLVCPGLGIAPTTTLQYNNTPEYVIGIHKSGILADDRTSALGATDWYSTKLLPKMREFYKGDLVWDKAFINSDGQNNDHMWVIYNGGVYDLTNYFKTLKVFQRVDSVNFLNADIVSAIESNPGEDVTDSWDEIVKTAANNATENASVQNSLNCIKNLFYVGIPDFRYSARCQTNNYIMLAMTIILCSVILVKFLAALQFGSKRRPAPQDKFVICQVPAYTEGEDSLRKALDSLTALQYDNKRKLICVICDGIIVGAGNDRPTPKIVLDILGVDPKVDPPALPFKSVGTGSEQLNYGKVYSGLYEFEGNVVPYLVVVKCGKESEQTKSKPGNRGKRDSQILLMSFLNRVHHRAPMSPLELEMFHQINNIIGVDPELYEYLMMVDADTCVREDSLNRLVSACANDAKIAGICGETGLQNDDKSWWTMIQVYEYFISHNLAKAFESLFGSVTCLPGCFTMYRLRTVDKGKPLIIADGVIRDYAVCDVDTLHKKNLLSLGEDRYLTTLMTKYFPSMKYKFIPDAYCQTAAPESWSVLLSQRRRWINSTIHNLFELMKLKEMCGFCCFSMRFVVFIDLFGTIILPATTIYLGYMIYLAASSTGQFPIISIIMLAAVYGLQALIFILKRQWQHIGWMIIYIMAFPIYSFALPIYSFWNQDNFSWGNTRIVIGEKGNKQLVAVDDEGFDPRSIPLQRWDDYAMANNLPGRRGGYMEKADMGYDDQYEMDEIRSVYSSVRQGSVLTGMNRNNTYMPPQSPAPFGHMVRASGAASPYHHDQAMANRQSMASLGTHDINRGQTPFQDFPSSRPSVSNLRGQANPSPGLGANRSQSALGLNRPHAAAQSTSSFDFQRGNMQGPDDSMIIEAIQGVLREVDLDTVTKKQVRALVEQRLQTGLVGERRTFMDRQIDNELANM.

Asn159, Asn637, Asn652, Asn664, and Asn669 each carry an N-linked (GlcNAc...) asparagine glycan. 2 helical membrane-spanning segments follow: residues 745–765 and 781–801; these read IWVAIVWFWTFWIPSPLLSFV and LTLVWFIVLINAAIVFWIVAF. N-linked (GlcNAc...) asparagine glycans are attached at residues Asn1014 and Asn1018. The chain crosses the membrane as a helical span at residues 1051 to 1071; sequence IMLAMTIILCSVILVKFLAAL. A glycan (N-linked (GlcNAc...) asparagine) is linked at Asn1416. 3 helical membrane-spanning segments follow: residues 1441-1461, 1474-1494, and 1502-1522; these read FVVFIDLFGTIILPATTIYLG, FPIISIIMLAAVYGLQALIFI, and IGWMIIYIMAFPIYSFALPIY. Asn1529 and Asn1617 each carry an N-linked (GlcNAc...) asparagine glycan. Positions 1659–1724 are disordered; the sequence is THDINRGQTP…SFDFQRGNMQ (66 aa). Residues 1664–1688 show a composition bias toward polar residues; it reads RGQTPFQDFPSSRPSVSNLRGQANP. The N-linked (GlcNAc...) asparagine glycan is linked to Asn1695. One can recognise a DEK-C domain in the interval 1725–1781; that stretch reads GPDDSMIIEAIQGVLREVDLDTVTKKQVRALVEQRLQTGLVGERRTFMDRQIDNELA.

Belongs to the chitin synthase family. Class V subfamily.

The protein localises to the cell membrane. It catalyses the reaction [(1-&gt;4)-N-acetyl-beta-D-glucosaminyl](n) + UDP-N-acetyl-alpha-D-glucosamine = [(1-&gt;4)-N-acetyl-beta-D-glucosaminyl](n+1) + UDP + H(+). Functionally, polymerizes chitin, a structural polymer of the cell wall and septum, by transferring the sugar moiety of UDP-GlcNAc to the non-reducing end of the growing chitin polymer. Responsible for about 29% of the chitin in conidial walls, is essential for conidial wall strength in media with high water potential and contributes to strength of hyphal tips. The chain is Chitin synthase A from Colletotrichum graminicola (Maize anthracnose fungus).